The chain runs to 171 residues: uncharacterized protein (171 aa).

An N-terminal signal peptide occupies residues 1-20; that stretch reads MRDFYLFLGAVFLLVLGVWA.

This is an uncharacterized protein from Aquifex aeolicus (strain VF5).